The sequence spans 69 residues: Large ribosomal subunit protein uL29 (69 aa).

It belongs to the universal ribosomal protein uL29 family.

This Staphylococcus aureus (strain Mu3 / ATCC 700698) protein is Large ribosomal subunit protein uL29.